Here is an 831-residue protein sequence, read N- to C-terminus: MASKTTSEELKTATALKKRSSDVHAVDHSGNVYKGFQIWTDLAPSVKEEPDLMFAKCIVQAGTDKGNLTCVQIDPPGFDEPFEVPQANAWNVNSLIDPMTYGDIGMLPHTNIPCVLDFLKVRFMKNQIYTTADPLVVAINPFRDLGNTTLDWIVRYRDTFDLSKLAPHVFYTARRALDNLHAVNKSQTIIVSGESGAGKTEATKQIMRYFAAAKTGSMDLRIQNAIMAANPVLEAFGNAKTIRNNNSSRFGRFMQLDVGREGGIKFGSVVAFLLEKSRVLTQDEQERSYHIFYQMCKGADAAMKERFHILPLSEYKYINPLCLDAPGIDDVAEFHEVCESFRSMNLTEDEVASVWSIVSGVLLLGNVEVTATKDGGIDDAAAIEGKNLEVFKKACGLLFLDAERIREELTVKVSYAGNQEIRGRWKQEDGDMLKSSLAKAMYDKLFMWIIAVLNRSIKPPGGFKIFMGMLDIFGFEVFKNNSLEQFFINITNEMLQKNFVDIVFDRESKLYRDEGVSSKELIFTSNAEVIKILTAKNNSVLAALEDQCLAPGGSDEKFLSTCKNALKGTTKFKPAKVSPNINFLISHTVGDIQYNAEGFLFKNKDVLRAEIMEIVQQSKNPVVAQLFAGIVMEKGKMAKGQLIGSQFLSQLQSLMELINSTEPHFIRCIKPNDTKKPLDWVPSKMLIQLHALSVLEALQLRQLGYSYRRPFKEFLFQFKFIDLSASENPNLDPKEAALRLLKSSKLPSEEYQLGKTMVFLKQTGAKELTQIQRECLSSWEPLVSVLEAYYAGRRHKKQLLKKTPFIIRAQAHIRRHLVDNNVSPATVQPAF.

The 675-residue stretch at 99–773 (MTYGDIGMLP…GAKELTQIQR (675 aa)) folds into the Myosin motor domain. 193–200 (GESGAGKT) contributes to the ATP binding site. An actin-binding region spans residues 663-673 (PHFIRCIKPND). Residues 775–831 (CLSSWEPLVSVLEAYYAGRRHKKQLLKKTPFIIRAQAHIRRHLVDNNVSPATVQPAF) form a tail region.

Belongs to the TRAFAC class myosin-kinesin ATPase superfamily. Myosin family.

The protein resides in the cell membrane. Its function is as follows. Myosins are actin-based motor molecules with ATPase activity. Unconventional myosins serve in intracellular movements. Their highly divergent tails are presumed to bind to membranous compartments, which would be moved relative to actin filaments. The polypeptide is Myosin-A (Toxoplasma gondii).